We begin with the raw amino-acid sequence, 695 residues long: MSDLSHYRNIGIFAHVDAGKTTTTERILKLTGKIHKTGEVHDGESTTDFMEQEAERGITIQSAATTCFWKDHRMNIIDTPGHVDFTVEVYRSLKVLDGGIGVFCGSGGVEPQSETNWRYANESGVARCIFVNKLDRMGADFYRVVGQVKKVLAANPLVMTLPIGIEDEFKGVVNLLDMKAYIWDDTGLPENYEVVDIPEDMVEKANEYREQLIETAVEQDDDLMMAYMDGEEPSLEDIKRCIRKGTRDLAFFPTYCGSAFKNKGIQLVLDAVIDFLPSPTEVDPQPLTDEETGEPTGEVATVSTDEPFRALAFKIMDDRFGALTFIRIYSGVLNKGDTILNSATGKTERIGRMVEMHADERTELTSAQAGDILAVVGMKNVQTGHTLCDPKNACTLEPMIFPEPVISIAVKPKDKGANEKMSIAIGKLVAEDPSFQVETDEDSGETILKGMGELHLDIKVDILKRTYGVELEVGQPQVAYRETITLPVEDSYTHKKQSGGSGQFGKIDYRIKPGETNSGFKFTSTVVGGNVPKEFFPAIEKGFAGMMEVGPLAGYPVLDVEVELYDGGFHAVDSSAIAFEIAAKGAFRQSMPKAGPQILEPVMKVDVFSPEDNVGDVIGDLNRRRGMIKDQEAGATGVRIKADVPLSEMFGYIGHLRTITSGRGQFSMEFSHYSACPQNVADKVIEEAKARKAAK.

Residues 5–280 (SHYRNIGIFA…AVIDFLPSPT (276 aa)) form the tr-type G domain. GTP is bound by residues 14–21 (AHVDAGKT), 78–82 (DTPGH), and 132–135 (NKLD). The segment at 279-299 (PTEVDPQPLTDEETGEPTGEV) is disordered.

This sequence belongs to the TRAFAC class translation factor GTPase superfamily. Classic translation factor GTPase family. EF-G/EF-2 subfamily.

It is found in the cytoplasm. Functionally, catalyzes the GTP-dependent ribosomal translocation step during translation elongation. During this step, the ribosome changes from the pre-translocational (PRE) to the post-translocational (POST) state as the newly formed A-site-bound peptidyl-tRNA and P-site-bound deacylated tRNA move to the P and E sites, respectively. Catalyzes the coordinated movement of the two tRNA molecules, the mRNA and conformational changes in the ribosome. This chain is Elongation factor G, found in Alteromonas mediterranea (strain DSM 17117 / CIP 110805 / LMG 28347 / Deep ecotype).